Reading from the N-terminus, the 87-residue chain is UPF0248 protein TSIB_1445 (87 aa).

It belongs to the UPF0248 family.

This chain is UPF0248 protein TSIB_1445, found in Thermococcus sibiricus (strain DSM 12597 / MM 739).